The chain runs to 83 residues: Prolactin-releasing peptide (83 aa).

An N-terminal signal peptide occupies residues 1–21 (MALKTWLLCLLLLSLVLPGAS). The residue at position 52 (Phe52) is a Phenylalanine amide. The propeptide occupies 57 to 83 (ATPRDVTGLGQLSCLPLDGRTKFSQRG).

As to expression, widely expressed, with highest levels in medulla oblongata and hypothalamus.

It localises to the secreted. Its function is as follows. Stimulates prolactin (PRL) release and regulates the expression of prolactin through its receptor GPR10. May stimulate lactotrophs directly to secrete PRL. This Rattus norvegicus (Rat) protein is Prolactin-releasing peptide (Prlh).